Here is a 140-residue protein sequence, read N- to C-terminus: UPF0134 protein MPN_130 (140 aa).

This sequence belongs to the UPF0134 family.

This Mycoplasma pneumoniae (strain ATCC 29342 / M129 / Subtype 1) (Mycoplasmoides pneumoniae) protein is UPF0134 protein MPN_130.